The chain runs to 255 residues: Menaquinone reductase, iron-sulfur cluster-binding subunit (255 aa).

4Fe-4S ferredoxin-type domains follow at residues 11-41 (WGMV…PQPD), 66-97 (HDVA…KNEE), and 99-128 (GIVS…FNWF). [4Fe-4S] cluster-binding residues include C20, C23, C26, C30, C75, C78, C83, C87, C108, C111, C114, and C118. [3Fe-4S] cluster contacts are provided by C155, C158, C188, and C192.

The Qrc complex is composed of four subunits: QrcA, QrcB, QrcC and QrcD. Can form a supercomplex with the [NiFe] hydrogenase HynA1 and the tetraheme Type I cytochrome c3 TpIc(3), its physiological electron donors. [4Fe-4S] cluster is required as a cofactor. The cofactor is [3Fe-4S] cluster.

It is found in the periplasm. In terms of biological role, component of the respiratory Qrc complex, that catalyzes the reduction of the menaquinone pool using electrons transferred from the reduced periplasmic cytochrome c3, and which is probably involved in sulfate respiration. Is likely essential for growth on H(2) or formate since the periplasmic hydrogenases and/or formate dehydrogenases act as primary electron donors for the Qrc complex. QrcC is an electron-transferring subunit; its cubane iron sulfur clusters form a pathway for electron transfer between the hemes of QrcA and the membrane quinone pool. In Nitratidesulfovibrio vulgaris (strain ATCC 29579 / DSM 644 / CCUG 34227 / NCIMB 8303 / VKM B-1760 / Hildenborough) (Desulfovibrio vulgaris), this protein is Menaquinone reductase, iron-sulfur cluster-binding subunit.